Consider the following 405-residue polypeptide: Elongation factor Tu (405 aa).

Residues 10-215 form the tr-type G domain; the sequence is KPHVNVGTIG…AVDSYIPTPE (206 aa). The interval 19 to 26 is G1; the sequence is GHVDHGKT. Position 19-26 (19-26) interacts with GTP; sequence GHVDHGKT. Residue threonine 26 coordinates Mg(2+). The interval 61 to 65 is G2; sequence GITIN. Residues 82–85 form a G3 region; the sequence is DCPG. GTP-binding positions include 82-86 and 137-140; these read DCPGH and NKVD. Residues 137–140 are G4; sequence NKVD. The segment at 175–177 is G5; the sequence is SAL.

Belongs to the TRAFAC class translation factor GTPase superfamily. Classic translation factor GTPase family. EF-Tu/EF-1A subfamily. As to quaternary structure, monomer.

It is found in the cytoplasm. It catalyses the reaction GTP + H2O = GDP + phosphate + H(+). Its function is as follows. GTP hydrolase that promotes the GTP-dependent binding of aminoacyl-tRNA to the A-site of ribosomes during protein biosynthesis. The chain is Elongation factor Tu from Deinonema sp.